The following is a 277-amino-acid chain: Shikimate dehydrogenase (NADP(+)) (277 aa).

Shikimate is bound by residues 15 to 17 and Thr-62; that span reads SLS. Catalysis depends on Lys-66, which acts as the Proton acceptor. Shikimate contacts are provided by Asn-87 and Asp-102. NADP(+)-binding positions include 127 to 131, 151 to 156, and Ile-219; these read GAGGA and NRTVDK. Residue Tyr-221 participates in shikimate binding. Gly-242 lines the NADP(+) pocket.

Belongs to the shikimate dehydrogenase family. Homodimer.

It catalyses the reaction shikimate + NADP(+) = 3-dehydroshikimate + NADPH + H(+). It functions in the pathway metabolic intermediate biosynthesis; chorismate biosynthesis; chorismate from D-erythrose 4-phosphate and phosphoenolpyruvate: step 4/7. Its function is as follows. Involved in the biosynthesis of the chorismate, which leads to the biosynthesis of aromatic amino acids. Catalyzes the reversible NADPH linked reduction of 3-dehydroshikimate (DHSA) to yield shikimate (SA). This is Shikimate dehydrogenase (NADP(+)) from Bacillus cereus (strain AH820).